The chain runs to 78 residues: DNA-directed RNA polymerase subunit omega (78 aa).

It belongs to the RNA polymerase subunit omega family. As to quaternary structure, in cyanobacteria the RNAP catalytic core is composed of 2 alpha, 1 beta, 1 beta', 1 gamma and 1 omega subunit. When a sigma factor is associated with the core the holoenzyme is formed, which can initiate transcription.

The catalysed reaction is RNA(n) + a ribonucleoside 5'-triphosphate = RNA(n+1) + diphosphate. Its function is as follows. Promotes RNA polymerase assembly. Latches the N- and C-terminal regions of the beta' subunit thereby facilitating its interaction with the beta and alpha subunits. The sequence is that of DNA-directed RNA polymerase subunit omega from Prochlorococcus marinus (strain MIT 9515).